Consider the following 154-residue polypeptide: MATFSQKPAEVEKKWILIDAEGLVVGRLASIIAMRLRGKHKATFTPHVDDGDNVIVINADKIVLTGKKYEDKVYYWHTGYAGGIKERTARQIIEGRFPERVVEKAVERMVPRGPLGRRQMKNLRVYAGSNHPHEAQQPVVLDVAKLNKKNVRSA.

It belongs to the universal ribosomal protein uL13 family. In terms of assembly, part of the 50S ribosomal subunit.

Its function is as follows. This protein is one of the early assembly proteins of the 50S ribosomal subunit, although it is not seen to bind rRNA by itself. It is important during the early stages of 50S assembly. The polypeptide is Large ribosomal subunit protein uL13 (Rhizobium rhizogenes (strain K84 / ATCC BAA-868) (Agrobacterium radiobacter)).